Reading from the N-terminus, the 1265-residue chain is Protein FAM193A (1265 aa).

A coiled-coil region spans residues 107–142 (SEDTYSTLLQRYQRSEEELRRVAEEWLECQKRIDAY). Residues 247–272 (APDYLAERSPPSVSSASSGSGSSSPI) form a disordered region. Positions 255–271 (SPPSVSSASSGSGSSSP) are enriched in low complexity. Position 293 is a phosphoserine (Ser-293). Disordered regions lie at residues 331-407 (NGGG…EQAP), 553-586 (GSEI…SKEK), 626-674 (VQSS…APLP), 750-785 (ENGV…NQKE), 822-841 (LTKR…ERES), 859-881 (ETKP…KLEE), and 893-1163 (EHLH…DRVN). Over residues 355-365 (EADDEEADGES) the composition is skewed to acidic residues. Phosphoserine is present on Ser-383. A Phosphoserine modification is found at Ser-642. Residues 757–769 (QQDDGDESADEDS) show a composition bias toward acidic residues. Residues 772–781 (EHSSSTSTST) are compositionally biased toward low complexity. The segment covering 868–877 (AAKRARHKQR) has biased composition (basic residues). Positions 873 to 932 (RHKQRKLEEKARLEAEARAREHLHLQEEQRRREEEEDEEEEEDRFKEEFQRLQELQKLRA) form a coiled coil. Basic and acidic residues-rich tracts occupy residues 893-905 (EHLH…RRRE) and 915-929 (DRFK…ELQK). Positions 931–940 (RAVKKKKKER) are enriched in basic residues. The span at 953–973 (RNFQAATESVPNSGNIHNGSL) shows a compositional bias: polar residues. Positions 1093–1118 (TEQKREERKVNSNNNNKKQLNHIKDE) form a coiled coil. Residues Ser-1129 and Ser-1144 each carry the phosphoserine modification. The span at 1149–1159 (GKNKKNKKKKG) shows a compositional bias: basic residues.

This sequence belongs to the FAM193 family.

This is Protein FAM193A (FAM193A) from Homo sapiens (Human).